A 625-amino-acid polypeptide reads, in one-letter code: Prothrombin (625 aa).

Positions 1–24 (MARVRGPRLPGCLALAALFSLVHS) are cleaved as a signal peptide. A propeptide spanning residues 25 to 43 (QHVFLAHQQASSLLQRARR) is cleaved from the precursor. The Gla domain occupies 44 to 90 (ANKGFLEEVRKGNLERECLEEPCSREEAFEALESLSATDAFWAKYTA). 4-carboxyglutamate is present on residues Glu-50, Glu-51, Glu-58, Glu-60, Glu-63, Glu-64, Glu-69, Glu-70, Glu-73, and Glu-76. Cysteines 61 and 66 form a disulfide. Cystine bridges form between Cys-91/Cys-104, Cys-109/Cys-187, Cys-130/Cys-170, Cys-158/Cys-182, Cys-214/Cys-292, Cys-235/Cys-275, Cys-263/Cys-287, Cys-339/Cys-485, Cys-394/Cys-410, Cys-539/Cys-553, and Cys-567/Cys-597. Kringle domains follow at residues 109–187 (CAEG…VPVC) and 214–292 (CVPD…LNYC). Residues Asn-120 and Asn-144 are each glycosylated (N-linked (GlcNAc...) asparagine). A Peptidase S1 domain is found at 367–621 (IVEGQDAEVG…LKKWIQKVID (255 aa)). His-409 serves as the catalytic Charge relay system. Asn-419 is a glycosylation site (N-linked (GlcNAc...) asparagine). The active-site Charge relay system is Asp-465. Residues 554–576 (AGYKPGEGKRGDACEGDSGGPFV) are high affinity receptor-binding region which is also known as the TP508 peptide. Ser-571 serves as the catalytic Charge relay system.

This sequence belongs to the peptidase S1 family. Heterodimer (named alpha-thrombin) of a light and a heavy chain; disulfide-linked. Forms a heterodimer with SERPINA5. In plasma, interacts (via N-terminus) with alpha-1-microglobulin; this interaction does not prevent the activation of prothrombin to thrombin. The gamma-carboxyglutamyl residues, which bind calcium ions, result from the carboxylation of glutamyl residues by a microsomal enzyme, the vitamin K-dependent carboxylase. The modified residues are necessary for the calcium-dependent interaction with a negatively charged phospholipid surface, which is essential for the conversion of prothrombin to thrombin. Post-translationally, in the penultimate step of the coagulation cascade, prothrombin is converted to thrombin by the prothrombinase complex composed of factor Xa (F10), cofactor Va (F5), and phospholipids. This activation requires factor Xa-catalyzed sequential cleavage at 2 sites, Arg-317 and Arg-366, along 2 possible pathways. In the first pathway, the first cleavage occurs at Arg-317, leading to the formation of the inactive intermediate prethrombin-2. This pathway preferentially occurs on platelets and in the absence of cofactor Va. In the second pathway, the first cleavage occurs at Arg-366, which separates protease domain into 2 chains that remain connected through a disulfide bond and generates the active intermediate meizothrombin. The presence of cofactor Va directs activation along the meizothrombin pathway and greatly accelerates the rate of cleavage at Arg-366, but has a smaller effect on the cleavage of meizothrombin at Arg-317. Meizothrombin accumulates as an intermediate when prothrombinase is assembled on the membrane of red blood cells. In terms of tissue distribution, expressed by the liver and secreted in plasma.

The protein localises to the secreted. It is found in the extracellular space. The enzyme catalyses Selective cleavage of Arg-|-Gly bonds in fibrinogen to form fibrin and release fibrinopeptides A and B.. Activity is promoted in the presence of negatively charged surfaces, such as polyphosphate and dextran sulfate. Inhibited by SERPINA5. Functionally, thrombin, which cleaves bonds after Arg and Lys, converts fibrinogen to fibrin and activates factors V, VII, VIII, XIII, and, in complex with thrombomodulin, protein C. Functions in blood homeostasis, inflammation and wound healing. Activates coagulation factor XI (F11); activation is promoted by the contact with negatively charged surfaces. Triggers the production of pro-inflammatory cytokines, such as MCP-1/CCL2 and IL8/CXCL8, in endothelial cells. The polypeptide is Prothrombin (F2) (Bos taurus (Bovine)).